Consider the following 185-residue polypeptide: Elongation factor P (185 aa).

The protein belongs to the elongation factor P family.

The protein localises to the cytoplasm. Its pathway is protein biosynthesis; polypeptide chain elongation. Functionally, involved in peptide bond synthesis. Stimulates efficient translation and peptide-bond synthesis on native or reconstituted 70S ribosomes in vitro. Probably functions indirectly by altering the affinity of the ribosome for aminoacyl-tRNA, thus increasing their reactivity as acceptors for peptidyl transferase. The polypeptide is Elongation factor P (Clostridium botulinum (strain Alaska E43 / Type E3)).